A 265-amino-acid polypeptide reads, in one-letter code: tRNA (guanine-N(7)-)-methyltransferase (265 aa).

The interval 1-40 (MIHDDDPNAPGAPHDDDATAAPASATRAAPAAGDDDDANP) is disordered. Positions 19 to 32 (TAAPASATRAAPAA) are enriched in low complexity. Residues Glu-95, Glu-120, Asp-147, and Asp-170 each contribute to the S-adenosyl-L-methionine site. Asp-170 is an active-site residue. Substrate is bound by residues Lys-174, Asp-206, and 241-244 (TKFE).

It belongs to the class I-like SAM-binding methyltransferase superfamily. TrmB family.

It catalyses the reaction guanosine(46) in tRNA + S-adenosyl-L-methionine = N(7)-methylguanosine(46) in tRNA + S-adenosyl-L-homocysteine. It functions in the pathway tRNA modification; N(7)-methylguanine-tRNA biosynthesis. In terms of biological role, catalyzes the formation of N(7)-methylguanine at position 46 (m7G46) in tRNA. This is tRNA (guanine-N(7)-)-methyltransferase from Burkholderia pseudomallei (strain 1710b).